The chain runs to 127 residues: Holo-[acyl-carrier-protein] synthase (127 aa).

Positions 9 and 58 each coordinate Mg(2+).

It belongs to the P-Pant transferase superfamily. AcpS family. Mg(2+) serves as cofactor.

It localises to the cytoplasm. It carries out the reaction apo-[ACP] + CoA = holo-[ACP] + adenosine 3',5'-bisphosphate + H(+). In terms of biological role, transfers the 4'-phosphopantetheine moiety from coenzyme A to a Ser of acyl-carrier-protein. In Shewanella baltica (strain OS155 / ATCC BAA-1091), this protein is Holo-[acyl-carrier-protein] synthase.